The sequence spans 210 residues: Uracil phosphoribosyltransferase (210 aa).

5-phospho-alpha-D-ribose 1-diphosphate contacts are provided by residues Arg80, Arg105, and Asp132–Ser140. Residues Ile195 and Gly200–Ala202 each bind uracil. A 5-phospho-alpha-D-ribose 1-diphosphate-binding site is contributed by Asp201.

Belongs to the UPRTase family. Requires Mg(2+) as cofactor.

It catalyses the reaction UMP + diphosphate = 5-phospho-alpha-D-ribose 1-diphosphate + uracil. Its pathway is pyrimidine metabolism; UMP biosynthesis via salvage pathway; UMP from uracil: step 1/1. With respect to regulation, allosterically activated by GTP. In terms of biological role, catalyzes the conversion of uracil and 5-phospho-alpha-D-ribose 1-diphosphate (PRPP) to UMP and diphosphate. In Deinococcus radiodurans (strain ATCC 13939 / DSM 20539 / JCM 16871 / CCUG 27074 / LMG 4051 / NBRC 15346 / NCIMB 9279 / VKM B-1422 / R1), this protein is Uracil phosphoribosyltransferase.